The following is a 978-amino-acid chain: MKLEHPDRLMNRTPLSLAALEVHDAFAERHIGPDSADQQAMLEALGFASRAALIDAVIPKTIRRTEPLPLGPFAQPKSEAEALATLRELADRNQVFRSYIGQGYYNAHTPTVILRNVLENPAWYTAYTPYQPEISQGRLEALLNFQQMIVDLTGLAISNASLLDEATAAAEAMTLLQRIGKPKSNVFYVADDVLPQTIEVVKTRATPVGIEVKVGPAADAANANAFGVLLQYPGVNGDVRDYRALAEAIHAAGGHVVVAADLLALTVLTPPGEWGADVAVGNTQRFGVPVGFGGPHAAYLAVRDEFKRQMPGRLVGVTVDAQGNPALRLALQTREQHIRREKATSNVCTAQALLAIMASMYAVYHGPHGLKTIALRVNRIAALLAEGAKQLGYTLVNETFFDTLTFETGARTQALHDAALAKRINLRRVSDTQVGLSVDETTTRRDLADLLEVFAQAAGAKIVPQVDALDSTIAASDTASVPPALERTSAYLTHHVFNRHHSETEMLRYLRSLSDKDLALDRSMIPLGSCTMKLNATSEMLPVTWPEFGQIHPFAPAEQTVGYREMIDQLEAMLVAATGYAAVSLQPNAGSQGEYAGLLIIHAYHASRGEAHRNVCLIPASAHGTNPASAHMAGMQVIVVACDAQGNVDIEDLKKKAEQHADKLAAIMITYPSTHGVFEQNVREICEIVHAHGGQVYVDGANMNAMVGLTAPGQFGGDVSHLNLHKTFCIPHGGGGPGVGPVAVGAHLAQFLPNQISSGYERAPNGIGAVSGAPYGSASILPISWMYIAMMGAKNLTAATETAILNANYVAKKLAPHYPVLYSGPGGLVAHECILDLRPIKETSGITVDDVAKRLADYGFHAPTMSFPVPGTLMVEPTESESKEELDRFIEAMIAIREEIRAVEEGRSDREDNPLKHAPHTAAVVIANDWKHAYARETAAYPLPTLIAKKYWPPVGRADNVYGDRNLFCSCVPIADYE.

Lys726 bears the N6-(pyridoxal phosphate)lysine mark.

This sequence belongs to the GcvP family. The glycine cleavage system is composed of four proteins: P, T, L and H. Requires pyridoxal 5'-phosphate as cofactor.

It catalyses the reaction N(6)-[(R)-lipoyl]-L-lysyl-[glycine-cleavage complex H protein] + glycine + H(+) = N(6)-[(R)-S(8)-aminomethyldihydrolipoyl]-L-lysyl-[glycine-cleavage complex H protein] + CO2. Functionally, the glycine cleavage system catalyzes the degradation of glycine. The P protein binds the alpha-amino group of glycine through its pyridoxal phosphate cofactor; CO(2) is released and the remaining methylamine moiety is then transferred to the lipoamide cofactor of the H protein. The protein is Glycine dehydrogenase (decarboxylating) of Paraburkholderia xenovorans (strain LB400).